The chain runs to 295 residues: Bifunctional protein FolD (295 aa).

NADP(+) contacts are provided by residues 166–168 (GRS), S195, and I236.

The protein belongs to the tetrahydrofolate dehydrogenase/cyclohydrolase family. In terms of assembly, homodimer.

The catalysed reaction is (6R)-5,10-methylene-5,6,7,8-tetrahydrofolate + NADP(+) = (6R)-5,10-methenyltetrahydrofolate + NADPH. The enzyme catalyses (6R)-5,10-methenyltetrahydrofolate + H2O = (6R)-10-formyltetrahydrofolate + H(+). It functions in the pathway one-carbon metabolism; tetrahydrofolate interconversion. Its function is as follows. Catalyzes the oxidation of 5,10-methylenetetrahydrofolate to 5,10-methenyltetrahydrofolate and then the hydrolysis of 5,10-methenyltetrahydrofolate to 10-formyltetrahydrofolate. This chain is Bifunctional protein FolD, found in Chlorobium phaeobacteroides (strain DSM 266 / SMG 266 / 2430).